A 161-amino-acid polypeptide reads, in one-letter code: UPF0178 protein PXO_00400 (161 aa).

The protein belongs to the UPF0178 family.

The chain is UPF0178 protein PXO_00400 from Xanthomonas oryzae pv. oryzae (strain PXO99A).